Here is a 224-residue protein sequence, read N- to C-terminus: Iron-sulfur cluster repair protein ScdA (224 aa).

The protein belongs to the RIC family. ScdA subfamily. Homodimer.

Its subcellular location is the cytoplasm. Functionally, di-iron-containing protein involved in the repair of iron-sulfur clusters damaged by oxidative and nitrosative stress conditions. The protein is Iron-sulfur cluster repair protein ScdA of Staphylococcus epidermidis (strain ATCC 35984 / DSM 28319 / BCRC 17069 / CCUG 31568 / BM 3577 / RP62A).